Reading from the N-terminus, the 354-residue chain is Probable calcium-binding protein CML50 (354 aa).

Composition is skewed to low complexity over residues 1-10 (MSGYPPTSQG) and 28-71 (YSSG…SSYG). The tract at residues 1–159 (MSGYPPTSQG…PASSGHGGGY (159 aa)) is disordered. A compositionally biased stretch (pro residues) spans 72-81 (APPPSAPYAP). Residues 106 to 117 (GSSDYGSYGAGP) show a composition bias toward low complexity. EF-hand domains lie at 183-218 (GTDP…YQQR) and 249-284 (YSLQ…LGFS). Positions 196, 198, 200, 207, 262, 264, 266, 268, and 273 each coordinate Ca(2+).

Potential calcium sensor. The chain is Probable calcium-binding protein CML50 (CML50) from Arabidopsis thaliana (Mouse-ear cress).